An 891-amino-acid chain; its full sequence is DNA polymerase I (891 aa).

A 5'-3' exonuclease domain is found at 1 to 313; sequence MEQPVIKEGT…LLDNTPALDN (313 aa). Residues 314-488 enclose the 3'-5' exonuclease domain; that stretch reads TPKKSCMIVL…RLCEYFEKGG (175 aa). The segment at 492 to 890 is polymerase; the sequence is NLLSLAREIE…FIAKRWNELK (399 aa).

The protein belongs to the DNA polymerase type-A family. Single-chain monomer with multiple functions.

It catalyses the reaction DNA(n) + a 2'-deoxyribonucleoside 5'-triphosphate = DNA(n+1) + diphosphate. Its function is as follows. In addition to polymerase activity, this DNA polymerase exhibits 3'-5' and 5'-3' exonuclease activity. The chain is DNA polymerase I (polA) from Helicobacter pylori (strain ATCC 700392 / 26695) (Campylobacter pylori).